The sequence spans 292 residues: MRPCMDGKRLNLHLVSDATGDTLNAVARAASVQFEGSDIHLHRWSLIRSRLQLHRVLEGIEAERGPVLCSLLDQALRHELDEACQRLGLRILHVLDPVFDLLAEELGTPTRPTPGRQYVLDADYFRRIDAMHFVLSHDDGQALRGLAEADVILVGVSRSSKTPTSFYLANRGIKAANVPMVPGIELPGVLDDPPCPVVGLFIDAEPLIEIRRHRLTLLGQGGGAAGAFRPDSGDYVDEEAVKAELLWARRTCSARGWPTVNVTRRSIEETAAAVLKLMDAWHERRRRTATSA.

Residue 155-162 (GVSRSSKT) coordinates ADP.

It belongs to the pyruvate, phosphate/water dikinase regulatory protein family. PDRP subfamily.

It catalyses the reaction N(tele)-phospho-L-histidyl/L-threonyl-[pyruvate, phosphate dikinase] + ADP = N(tele)-phospho-L-histidyl/O-phospho-L-threonyl-[pyruvate, phosphate dikinase] + AMP + H(+). The enzyme catalyses N(tele)-phospho-L-histidyl/O-phospho-L-threonyl-[pyruvate, phosphate dikinase] + phosphate + H(+) = N(tele)-phospho-L-histidyl/L-threonyl-[pyruvate, phosphate dikinase] + diphosphate. Bifunctional serine/threonine kinase and phosphorylase involved in the regulation of the pyruvate, phosphate dikinase (PPDK) by catalyzing its phosphorylation/dephosphorylation. The sequence is that of Putative pyruvate, phosphate dikinase regulatory protein from Acidiphilium cryptum (strain JF-5).